The chain runs to 451 residues: Inositol-pentakisphosphate 2-kinase (451 aa).

An N-acetylmethionine modification is found at M1. Residues 19–22 (GGAN) and R40 contribute to the ATP site. Substrate contacts are provided by R45 and R130. ATP-binding positions include 147-149 (NDH) and 166-168 (EIK). The EXKPK motif signature appears at 166 to 170 (EIKPK). 3 residues coordinate substrate: K170, K200, and N238. R241 is a binding site for ATP. 4 residues coordinate Zn(2+): H320, C330, C333, and H346. Residue D368 coordinates substrate. D407 contributes to the ATP binding site. Substrate is bound by residues K411, R415, and Y419.

This sequence belongs to the IPK1 type 2 family. Zn(2+) is required as a cofactor. In terms of tissue distribution, strongly expressed in leaves and cauline leaves. Weakly expressed in siliques and flowers. In flower, it is expressed in the major organs of developing flower buds. Strongly expressed in sepals, petals, in the male and female organs of immature and mature flower buds. Strongly expressed in the gynoecium and carpels which are fused to form the gynoecium. Also expressed in the transmitting tissue and ovules.

The catalysed reaction is 1D-myo-inositol 1,3,4,5,6-pentakisphosphate + ATP = 1D-myo-inositol hexakisphosphate + ADP + H(+). In terms of biological role, phosphorylates Ins(1,3,4,5,6)P5 at position 2 to form Ins(1,2,3,4,5,6)P6 (InsP6 or phytate). Phytate is a regulator of intracellular signaling, a highly abundant animal antinutrient, and a phosphate store in plant seeds. Also phosphorylates Ins(1,3,4,6)P4 and Ins(1,4,5,6)P4 to produce Ins(1,2,3,4,6)P5 and Ins(1,2,4,5,6)P5. In Arabidopsis thaliana (Mouse-ear cress), this protein is Inositol-pentakisphosphate 2-kinase (IPK1).